Consider the following 748-residue polypeptide: Spidroin-1 (748 aa).

25 consecutive repeat copies span residues Gln1–Gly25, Ala26–Gly38, Ala39–Gly66, Ala67–Gly96, Ala97–Gly130, Ala131–Gly158, Ala159–Gly191, Ala192–Gly204, Ala205–Gly235, Ala236–Gly262, Ala263–Gly292, Ala293–Gly305, Ala306–Gly333, Ala334–Gly360, Ala361–Gly394, Ala395–Gly424, Ala425–Gly458, Ala459–Gly485, Ala486–Gly512, Ala513–Gly525, Ser526–Gly555, Ala556–Gly582, Ala583–Gly612, Val613–Gly642, and Ala643–Ser655. The 25 X approximate tandem repeats stretch occupies residues Gln1–Ser655.

Belongs to the silk fibroin family. In terms of assembly, major subunit, with spidroin 2, of the dragline silk.

Its subcellular location is the secreted. It is found in the extracellular space. Its function is as follows. Spiders' major ampullate silk possesses unique characteristics of strength and elasticity. Fibroin consists of pseudocrystalline regions of antiparallel beta-sheet interspersed with elastic amorphous segments. In Trichonephila clavipes (Golden silk orbweaver), this protein is Spidroin-1.